A 199-amino-acid chain; its full sequence is Peroxiredoxin-1 (199 aa).

Ser2 is subject to N-acetylserine. The region spanning 6-165 (AKIGYPAPNF…ILRLVQAFQF (160 aa)) is the Thioredoxin domain. The residue at position 7 (Lys7) is an N6-acetyllysine; alternate. Lys7 is covalently cross-linked (Glycyl lysine isopeptide (Lys-Gly) (interchain with G-Cter in SUMO2); alternate). Lys16 is subject to N6-acetyllysine. Residue Ser32 is modified to Phosphoserine. Catalysis depends on Cys52, which acts as the Cysteine sulfenic acid (-SOH) intermediate. Position 90 is a phosphothreonine (Thr90). A Glycyl lysine isopeptide (Lys-Gly) (interchain with G-Cter in SUMO2) cross-link involves residue Lys120. Lys136 is modified (N6-acetyllysine). The segment at 176–199 (GWKPGSDTIKPDVQKSKEYFSKQK) is disordered. A compositionally biased stretch (basic and acidic residues) spans 184 to 199 (IKPDVQKSKEYFSKQK). Lys185 participates in a covalent cross-link: Glycyl lysine isopeptide (Lys-Gly) (interchain with G-Cter in SUMO1). Lys197 bears the N6-acetyllysine mark.

This sequence belongs to the peroxiredoxin family. AhpC/Prx1 subfamily. Homodimer; disulfide-linked, upon oxidation. 5 homodimers assemble to form a ring-like decamer. Interacts with GDPD5; forms a mixed-disulfide with GDPD5. Interacts with SESN1 and SESN2. Interacts with FAM107A. In terms of processing, phosphorylated on Thr-90 during the M-phase, which leads to a decrease in enzymatic activity. Post-translationally, acetylation increases reducing activity and resistance to superoxidation. Deacetylated by HDAC6 which decreases reducing activity.

It localises to the cytoplasm. It carries out the reaction a hydroperoxide + [thioredoxin]-dithiol = an alcohol + [thioredoxin]-disulfide + H2O. Its function is as follows. Thiol-specific peroxidase that catalyzes the reduction of hydrogen peroxide and organic hydroperoxides to water and alcohols, respectively. Plays a role in cell protection against oxidative stress by detoxifying peroxides and as sensor of hydrogen peroxide-mediated signaling events. Might participate in the signaling cascades of growth factors and tumor necrosis factor-alpha by regulating the intracellular concentrations of H(2)O(2). Reduces an intramolecular disulfide bond in GDPD5 that gates the ability to GDPD5 to drive postmitotic motor neuron differentiation. The protein is Peroxiredoxin-1 (PRDX1) of Cricetulus griseus (Chinese hamster).